The following is a 74-amino-acid chain: MQLFVRAQGLHTLEVTGQETVAQIKAHVASLEGISPEDQVVLLAGSPLEDEATLGQCGVEALTTLEVAGRMLGG.

Belongs to the ubiquitin family.

In terms of biological role, confers arsenite resistance. This is Ubiquitin-like protein FUBI (FAU) from Cricetulus griseus (Chinese hamster).